The sequence spans 486 residues: Maintenance of mitochondrial morphology protein 1 (486 aa).

Over 1 to 19 (MSNDTSAQPAQSSLSFTQG) the chain is Lumenal. Residues 20–40 (LLVGQLSVVLLIGAFIKFFIF) traverse the membrane as a helical segment. Topologically, residues 41-486 (GEASPSSSRS…GSLPDVVPVT (446 aa)) are cytoplasmic. 4 disordered regions span residues 45 to 98 (PSSS…RSIL), 269 to 318 (QTST…AGTT), 393 to 412 (VRGQ…GVST), and 420 to 486 (ARDA…VPVT). Over residues 51 to 61 (QTRRTSPHKRS) the composition is skewed to basic residues. Positions 70-79 (LGSRSLKEKP) are enriched in basic and acidic residues. Polar residues-rich tracts occupy residues 80–96 (SSNV…NTRS), 269–291 (QTST…NDYS), 307–318 (EQATQANNAGTT), and 401–412 (EVGSSGNAGVST). The 258-residue stretch at 125–382 (QPESLDWFNV…EPRVQVVALP (258 aa)) folds into the SMP-LTD domain. Basic and acidic residues-rich tracts occupy residues 429–440 (HATRDADMEGLR) and 462–473 (DSREQACRDDPF).

This sequence belongs to the MMM1 family. Homodimer. Component of the ER-mitochondria encounter structure (ERMES) or MDM complex, composed of MMM1, MDM10, MDM12 and MDM34. An MMM1 homodimer associates with one molecule of MDM12 on each side in a pairwise head-to-tail manner, and the SMP-LTD domains of MMM1 and MDM12 generate a continuous hydrophobic tunnel for phospholipid trafficking.

It is found in the endoplasmic reticulum membrane. Functionally, component of the ERMES/MDM complex, which serves as a molecular tether to connect the endoplasmic reticulum (ER) and mitochondria. Components of this complex are involved in the control of mitochondrial shape and protein biogenesis, and function in nonvesicular lipid trafficking between the ER and mitochondria. The MDM12-MMM1 subcomplex functions in the major beta-barrel assembly pathway that is responsible for biogenesis of all outer membrane beta-barrel proteins, and acts in a late step after the SAM complex. The MDM10-MDM12-MMM1 subcomplex further acts in the TOM40-specific pathway after the action of the MDM12-MMM1 complex. Essential for establishing and maintaining the structure of mitochondria and maintenance of mtDNA nucleoids. The sequence is that of Maintenance of mitochondrial morphology protein 1 from Coccidioides immitis (strain RS) (Valley fever fungus).